A 239-amino-acid polypeptide reads, in one-letter code: Ribosomal RNA large subunit methyltransferase E (239 aa).

Gly88, Trp90, Asp111, Asp127, and Asp151 together coordinate S-adenosyl-L-methionine. The active-site Proton acceptor is the Lys191.

Belongs to the class I-like SAM-binding methyltransferase superfamily. RNA methyltransferase RlmE family.

It localises to the cytoplasm. The catalysed reaction is uridine(2552) in 23S rRNA + S-adenosyl-L-methionine = 2'-O-methyluridine(2552) in 23S rRNA + S-adenosyl-L-homocysteine + H(+). Its function is as follows. Specifically methylates the uridine in position 2552 of 23S rRNA at the 2'-O position of the ribose in the fully assembled 50S ribosomal subunit. This chain is Ribosomal RNA large subunit methyltransferase E, found in Bartonella bacilliformis (strain ATCC 35685 / KC583 / Herrer 020/F12,63).